The sequence spans 400 residues: Nicotinate phosphoribosyltransferase (400 aa).

At His-220 the chain carries Phosphohistidine; by autocatalysis.

Belongs to the NAPRTase family. Transiently phosphorylated on a His residue during the reaction cycle. Phosphorylation strongly increases the affinity for substrates and increases the rate of nicotinate D-ribonucleotide production. Dephosphorylation regenerates the low-affinity form of the enzyme, leading to product release.

It carries out the reaction nicotinate + 5-phospho-alpha-D-ribose 1-diphosphate + ATP + H2O = nicotinate beta-D-ribonucleotide + ADP + phosphate + diphosphate. It participates in cofactor biosynthesis; NAD(+) biosynthesis; nicotinate D-ribonucleotide from nicotinate: step 1/1. Its function is as follows. Catalyzes the synthesis of beta-nicotinate D-ribonucleotide from nicotinate and 5-phospho-D-ribose 1-phosphate at the expense of ATP. The polypeptide is Nicotinate phosphoribosyltransferase (Escherichia coli (strain K12 / MC4100 / BW2952)).